A 145-amino-acid chain; its full sequence is UPF0179 protein MmarC6_0993 (145 aa).

The protein belongs to the UPF0179 family.

This Methanococcus maripaludis (strain C6 / ATCC BAA-1332) protein is UPF0179 protein MmarC6_0993.